The chain runs to 22 residues: Phospholipase A2 (22 aa).

The protein belongs to the phospholipase A2 family. The cofactor is Ca(2+).

The protein resides in the secreted. It catalyses the reaction a 1,2-diacyl-sn-glycero-3-phosphocholine + H2O = a 1-acyl-sn-glycero-3-phosphocholine + a fatty acid + H(+). PA2 catalyzes the calcium-dependent hydrolysis of the 2-acyl groups in 3-sn-phosphoglycerides. This Struthio camelus (Common ostrich) protein is Phospholipase A2.